A 96-amino-acid polypeptide reads, in one-letter code: MCPRTVLLIININHWFYDKNIVRIILTFRLDSGHISDICFINKNLANALITADISLLKRHDIRCTKYIITYYQRYRNKEKGKFISLCKNTIISSSV.

This is an uncharacterized protein from Saccharomyces cerevisiae (strain ATCC 204508 / S288c) (Baker's yeast).